The chain runs to 721 residues: Vacuolar transporter chaperone complex subunit 4 (721 aa).

Residues 1-146 form the SPX domain; sequence MKFGQLLKET…GWILKPVFAA (146 aa). The Cytoplasmic portion of the chain corresponds to 1–631; sequence MKFGQLLKET…KTYFALERTY (631 aa). Residues K198, R262, R264, K279, K292, Y357, and R359 each contribute to the ATP site. E421 contacts Mn(2+). The active site involves K453. Polar residues-rich tracts occupy residues 490-513 and 529-547; these read QGRS…SENT and IGSS…SDSF. Residues 490–547 are disordered; sequence QGRSQSGTHSSSVSANVLTDSENTPIHADGDNYVDEESRIGSSSTRNDNSTFQTSDSF. S495 carries the phosphoserine modification. Residue T497 is modified to Phosphothreonine. S501 carries the post-translational modification Phosphoserine. T534 is subject to Phosphothreonine. Position 546 is a phosphoserine (S546). A helical membrane pass occupies residues 632–652; that stretch reads LDYLRYSILMGSIGITLFSFA. Residues 653 to 657 are Vacuolar-facing; sequence KTRSG. The helical transmembrane segment at 658–678 threads the bilayer; it reads ILGAASFTLVALFAIFYSTFL. Residues 679 to 697 lie on the Cytoplasmic side of the membrane; that stretch reads YLWRAVNIAKHNAVRYDDR. The helical transmembrane segment at 698 to 718 threads the bilayer; that stretch reads FGPTAICVITFAAISANVILN. The Vacuolar segment spans residues 719 to 721; it reads FNA.

This sequence belongs to the VTC4 family. The VTC core complex is an integral membrane heterooligomer composed of at least the catalytic subunit vtc4 and the accessory subunits vtc1 and vtc2. vtc1 is a small membrane protein without hydrophilic domain. Vtc2 and vtc4 are related and have 2 hydrophilic domains that face the cytosol, an N-terminal SPX domain and the central core domain. The central core in vtc4 is the catalytic domain. It depends on Mn(2+) as a cofactor.

The protein resides in the vacuole membrane. The catalysed reaction is [phosphate](n) + ATP = [phosphate](n+1) + ADP. Its activity is regulated as follows. Activity of the enzyme is Mn(2+)-dependent and enhanced in the presence of pyrophosphate (PPi). Its function is as follows. Catalytic subunit of the vacuolar transporter chaperone (VTC) complex. The VTC complex acts as a vacuolar polyphosphate polymerase that catalyzes the synthesis of inorganic polyphosphate (polyP) via transfer of phosphate from ATP to a growing polyP chain, releasing ADP. VTC exposes its catalytic domain vtc4 to the cytosol, where the growing polyP chain winds through a tunnel-shaped pocket, integrating cytoplasmic polymer synthesis with polyP membrane translocation. The VTC complex carries 9 vacuolar transmembrane domains, which are likely to constitute the translocation channel into the organelle lumen. PolyP synthesis is tightly coupled to its transport into the vacuole lumen, in order to avoid otherwise toxic intermediates in the cytosol, and it depends on the proton gradient across the membrane, formed by V-ATPase. The VTC complex also plays a role in vacuolar membrane fusion. The polypeptide is Vacuolar transporter chaperone complex subunit 4 (vtc4) (Schizosaccharomyces pombe (strain 972 / ATCC 24843) (Fission yeast)).